We begin with the raw amino-acid sequence, 2581 residues long: Highly reducing polyketide synthase sorA (2581 aa).

Residues 14-436 form the Ketosynthase family 3 (KS3) domain; it reads SEPIAIIGMS…GSNAHIILED (423 aa). Catalysis depends on for beta-ketoacyl synthase activity residues Cys-187, His-322, and His-359. The tract at residues 574–868 is malonyl-CoA:ACP transacylase (MAT) domain; sequence VFTGQGAQWN…VVEVGPHTAL (295 aa). The N-terminal hotdog fold stretch occupies residues 966-1103; it reads HDLLGSIVEG…GLVSVELGES (138 aa). Residues 966 to 1270 are dehydratase (DH) domain; that stretch reads HDLLGSIVEG…GFSYQSLGRS (305 aa). The PKS/mFAS DH domain occupies 966–1273; that stretch reads HDLLGSIVEG…YQSLGRSTSL (308 aa). The active-site Proton acceptor; for dehydratase activity is the His-998. The interval 1119–1273 is C-terminal hotdog fold; it reads TRRILPADLF…YQSLGRSTSL (155 aa). Asp-1184 (proton donor; for dehydratase activity) is an active-site residue. The tract at residues 1461–1568 is methyltransferase (CMet) domain; that stretch reads LEVGAATGAI…SSLLKPGGTL (108 aa). Residues 1873–2184 form an enoyl reductase (ER)domain region; that stretch reads LKPDLLVFGD…AGDQIGKVVL (312 aa). Residues 2207 to 2389 form a ketoreductase (KR) domain region; that stretch reads VSYLIVGGSG…AVSIDLSVVN (183 aa). In terms of domain architecture, Carrier spans 2497 to 2574; that stretch reads DAVRVVGTAI…QLAIDVVDRS (78 aa). Ser-2534 carries the O-(pantetheine 4'-phosphoryl)serine modification.

It participates in secondary metabolite biosynthesis. Its function is as follows. Highly reducing polyketide synthase; part of the gene cluster that mediates the biosynthesis of sorbicillinoids, a diverse group of yellow secondary metabolites that restrict growth of competing pathogenic fungi but not of bacteria. Sorbicillinoids biosynthesis requires the action of two PKSs. SorA iteratively combines three acetyl units and the growing chain is modified by the ketoacyl reductase subunit, and optional by the enoyl reductase subunit in the second cycle. The polyketide is then handed over to the PKS SorB, which adds three more acetyl units, and two methyl groups. SorB releases an aldehyde, which undergoes spontaneous cyclization resulting in the formation of sorbicillin or 2',3'-dihydrosorbicillin. The monooxygenase sorC oxidizes sorbicillin and 2',3'-dihydrosorbicillin to 2',3'-dihydrosorbicillinol and sorbicillinol, respectively. The oxidoreductase sorD further converts sorbicillinol into oxosorbicillinol. Sorbicillinol is the building block for the other sorbicillinoids such as disorbicillinol, bisvertinolon, and dihydrobisvertinolone. The protein is Highly reducing polyketide synthase sorA of Penicillium rubens (strain ATCC 28089 / DSM 1075 / NRRL 1951 / Wisconsin 54-1255) (Penicillium chrysogenum).